Consider the following 184-residue polypeptide: MDSPMEKFIQTYLTLLRDGDETVETSKLSESCRKEKLDMKQVNEWIALFDVDKDQKITFEEFCRGLGLKQNEMRIERNHIKTVQSGREQSLPEGVSIIASTMPKPKQVEVTQLFKDIYNEVKKDPDMNKVVKTFKSELERRYGRVWQVNAVTHSYWASFSHEPFQSIQFQYDNKIILAWRTPSN.

In terms of domain architecture, EF-hand spans 37–72 (LDMKQVNEWIALFDVDKDQKITFEEFCRGLGLKQNE). Residues aspartate 50, aspartate 52, aspartate 54, lysine 56, and glutamate 61 each contribute to the Ca(2+) site.

The protein is Antigen Sm21.7 (SM21.7) of Schistosoma mansoni (Blood fluke).